Consider the following 121-residue polypeptide: Large ribosomal subunit protein bL20 (121 aa).

This sequence belongs to the bacterial ribosomal protein bL20 family.

Its function is as follows. Binds directly to 23S ribosomal RNA and is necessary for the in vitro assembly process of the 50S ribosomal subunit. It is not involved in the protein synthesizing functions of that subunit. In Persephonella marina (strain DSM 14350 / EX-H1), this protein is Large ribosomal subunit protein bL20.